The sequence spans 226 residues: Ras-related protein Rab11A (226 aa).

Residues 24-32 (GDSAVGKSQ), 43-49 (SLDSKST), 72-76 (DTAGQ), 130-133 (NKCD), and 160-162 (SAL) contribute to the GTP site. The Effector region motif lies at 46 to 54 (SKSTIGVEF). Residues cysteine 222 and cysteine 223 are each lipidated (S-geranylgeranyl cysteine). Cysteine 223 is subject to Cysteine methyl ester. The propeptide at 224–226 (QAS) is removed in mature form.

The protein belongs to the small GTPase superfamily. Rab family.

The protein resides in the cell membrane. The polypeptide is Ras-related protein Rab11A (RAB11A) (Lotus japonicus (Lotus corniculatus var. japonicus)).